We begin with the raw amino-acid sequence, 359 residues long: Membrane-bound lytic murein transglycosylase C (359 aa).

The signal sequence occupies residues 1–16 (MKKYLALALIAPLLIS). The N-palmitoyl cysteine moiety is linked to residue Cys17. Cys17 carries S-diacylglycerol cysteine lipidation.

Belongs to the transglycosylase Slt family.

The protein localises to the cell outer membrane. It carries out the reaction Exolytic cleavage of the (1-&gt;4)-beta-glycosidic linkage between N-acetylmuramic acid (MurNAc) and N-acetylglucosamine (GlcNAc) residues in peptidoglycan, from either the reducing or the non-reducing ends of the peptidoglycan chains, with concomitant formation of a 1,6-anhydrobond in the MurNAc residue.. Murein-degrading enzyme. May play a role in recycling of muropeptides during cell elongation and/or cell division. In Escherichia coli O157:H7, this protein is Membrane-bound lytic murein transglycosylase C.